The chain runs to 206 residues: Ribosomal RNA small subunit methyltransferase G (206 aa).

S-adenosyl-L-methionine-binding positions include glycine 74, leucine 79, 125-126 (VE), and arginine 140.

It belongs to the methyltransferase superfamily. RNA methyltransferase RsmG family.

It localises to the cytoplasm. It carries out the reaction guanosine(527) in 16S rRNA + S-adenosyl-L-methionine = N(7)-methylguanosine(527) in 16S rRNA + S-adenosyl-L-homocysteine. Functionally, specifically methylates the N7 position of guanine in position 527 of 16S rRNA. This chain is Ribosomal RNA small subunit methyltransferase G, found in Shewanella woodyi (strain ATCC 51908 / MS32).